Here is a 135-residue protein sequence, read N- to C-terminus: Histone H1, macronuclear (135 aa).

A compositionally biased stretch (low complexity) spans 1–17; it reads MPAKTATAVKRTTTTKK. The tract at residues 1-135 is disordered; it reads MPAKTATAVK…GGKKKSAKKN (135 aa). 2 stretches are compositionally biased toward basic residues: residues 18-54 and 62-79; these read SAAK…RRTP and KATK…RSAT. Positions 80–112 are enriched in low complexity; that stretch reads KKTTAAPAAAAAPATDAPAAAATPSKATGSAKK. Residues 113–135 show a composition bias toward basic residues; sequence ASARKSSAKKPAKGGKKKSAKKN.

The protein resides in the nucleus. It localises to the chromosome. Histones H1 are necessary for the condensation of nucleosome chains into higher-order structures. This is Histone H1, macronuclear from Euplotes eurystomus (Ciliate).